A 406-amino-acid chain; its full sequence is Peptidase T (406 aa).

Residue histidine 78 coordinates Zn(2+). Aspartate 80 is a catalytic residue. Aspartate 139 is a binding site for Zn(2+). The active-site Proton acceptor is the glutamate 173. Positions 174, 196, and 378 each coordinate Zn(2+).

The protein belongs to the peptidase M20B family. Requires Zn(2+) as cofactor.

The protein localises to the cytoplasm. It carries out the reaction Release of the N-terminal residue from a tripeptide.. In terms of biological role, cleaves the N-terminal amino acid of tripeptides. This chain is Peptidase T, found in Clostridium perfringens (strain ATCC 13124 / DSM 756 / JCM 1290 / NCIMB 6125 / NCTC 8237 / Type A).